The sequence spans 289 residues: Mitochondrial fission regulator 1-like (289 aa).

Threonine 27 carries the post-translational modification Phosphothreonine. Phosphoserine is present on residues serine 38, serine 100, serine 107, serine 221, serine 222, serine 235, serine 258, and serine 270.

This sequence belongs to the MTFR1 family. In terms of processing, phosphorylated by AMPK. Upon stress, phosphorylation by AMPK is sufficient to induce mitochondrial fragmentation.

Its subcellular location is the mitochondrion outer membrane. Its function is as follows. Mitochondrial protein required for adaptation of miochondrial dynamics to metabolic changes. Regulates mitochondrial morphology at steady state and mediates AMPK-dependent stress-induced mitochondrial fragmentation via the control of OPA1 levels. The sequence is that of Mitochondrial fission regulator 1-like (Mtfr1l) from Rattus norvegicus (Rat).